A 362-amino-acid polypeptide reads, in one-letter code: Phosphoserine aminotransferase (362 aa).

Residue arginine 42 coordinates L-glutamate. Pyridoxal 5'-phosphate-binding positions include alanine 76 to arginine 77, tryptophan 102, threonine 152, aspartate 172, and glutamine 195. Lysine 196 carries the N6-(pyridoxal phosphate)lysine modification. Asparagine 237–threonine 238 provides a ligand contact to pyridoxal 5'-phosphate.

This sequence belongs to the class-V pyridoxal-phosphate-dependent aminotransferase family. SerC subfamily. Homodimer. Pyridoxal 5'-phosphate is required as a cofactor.

The protein resides in the cytoplasm. The catalysed reaction is O-phospho-L-serine + 2-oxoglutarate = 3-phosphooxypyruvate + L-glutamate. It catalyses the reaction 4-(phosphooxy)-L-threonine + 2-oxoglutarate = (R)-3-hydroxy-2-oxo-4-phosphooxybutanoate + L-glutamate. The protein operates within amino-acid biosynthesis; L-serine biosynthesis; L-serine from 3-phospho-D-glycerate: step 2/3. It functions in the pathway cofactor biosynthesis; pyridoxine 5'-phosphate biosynthesis; pyridoxine 5'-phosphate from D-erythrose 4-phosphate: step 3/5. Functionally, catalyzes the reversible conversion of 3-phosphohydroxypyruvate to phosphoserine and of 3-hydroxy-2-oxo-4-phosphonooxybutanoate to phosphohydroxythreonine. The sequence is that of Phosphoserine aminotransferase from Haemophilus influenzae (strain ATCC 51907 / DSM 11121 / KW20 / Rd).